Reading from the N-terminus, the 141-residue chain is Nucleoside diphosphate kinase (141 aa).

Lys-11, Phe-59, Arg-87, Thr-93, Arg-104, and Asn-114 together coordinate ATP. The active-site Pros-phosphohistidine intermediate is the His-117.

The protein belongs to the NDK family. As to quaternary structure, homotetramer. Mg(2+) is required as a cofactor.

The protein resides in the cytoplasm. It carries out the reaction a 2'-deoxyribonucleoside 5'-diphosphate + ATP = a 2'-deoxyribonucleoside 5'-triphosphate + ADP. It catalyses the reaction a ribonucleoside 5'-diphosphate + ATP = a ribonucleoside 5'-triphosphate + ADP. Functionally, major role in the synthesis of nucleoside triphosphates other than ATP. The ATP gamma phosphate is transferred to the NDP beta phosphate via a ping-pong mechanism, using a phosphorylated active-site intermediate. The polypeptide is Nucleoside diphosphate kinase (Nitrosomonas europaea (strain ATCC 19718 / CIP 103999 / KCTC 2705 / NBRC 14298)).